The sequence spans 366 residues: MYMFLVKWQDLSEKVVYRRFTEIYEFHKTLKEMFPIEAGAINPENRIIPHLPAPKWFDGQRAAENHQGTLTEYCSTLMSLPTKISRCPHLLDFFKVRPDDLKLPTDNQTKKPETYLMPKDGKSTATDITGPIILQTYRAIADYEKTSGSEMALSTGDVVEVVEKSESGWWFCQMKAKRGWIPASFLEPLDSPDETEDPEPNYAGEPYVAIKAYTAVEGDEVSLLEGEAVEVIHKLLDGWWVIRKDDVTGYFPSMYLQKSGQDVSQAQRQIKRGAPPRRSSIRNAHSIHQRSRKRLSQDAYRRNSVRFLQQRRRQARPGPQSPGSPLEEERQTQRSKPQPAVPPRPSADLILNRCSESTKRKLASAV.

A PX domain is found at 1–101 (MYMFLVKWQD…DFFKVRPDDL (101 aa)). 2 SH3 domains span residues 132–191 (IILQ…PLDS) and 202–261 (YAGE…KSGQ). Residues 261–366 (QDVSQAQRQI…STKRKLASAV (106 aa)) form a disordered region. 2 positions are modified to phosphoserine: serine 279 and serine 280. The segment covering 285-294 (HSIHQRSRKR) has biased composition (basic residues). A phosphoserine mark is found at serine 296, serine 304, serine 321, and serine 324.

It is found in the cytoplasm. May be required for activation of the latent NADPH oxidase (necessary for superoxide production). The protein is Putative neutrophil cytosol factor 1C (NCF1C) of Homo sapiens (Human).